Consider the following 385-residue polypeptide: Probable tRNA sulfurtransferase (385 aa).

The region spanning 57 to 161 (NESIKRLSNV…NKNAYVWSNK (105 aa)) is the THUMP domain. ATP-binding positions include 181–182 (ML), 206–207 (YY), Arg-263, Gly-285, and Gln-294.

Belongs to the ThiI family.

The protein resides in the cytoplasm. The catalysed reaction is [ThiI sulfur-carrier protein]-S-sulfanyl-L-cysteine + a uridine in tRNA + 2 reduced [2Fe-2S]-[ferredoxin] + ATP + H(+) = [ThiI sulfur-carrier protein]-L-cysteine + a 4-thiouridine in tRNA + 2 oxidized [2Fe-2S]-[ferredoxin] + AMP + diphosphate. It carries out the reaction [ThiS sulfur-carrier protein]-C-terminal Gly-Gly-AMP + S-sulfanyl-L-cysteinyl-[cysteine desulfurase] + AH2 = [ThiS sulfur-carrier protein]-C-terminal-Gly-aminoethanethioate + L-cysteinyl-[cysteine desulfurase] + A + AMP + 2 H(+). It participates in cofactor biosynthesis; thiamine diphosphate biosynthesis. Catalyzes the ATP-dependent transfer of a sulfur to tRNA to produce 4-thiouridine in position 8 of tRNAs, which functions as a near-UV photosensor. Also catalyzes the transfer of sulfur to the sulfur carrier protein ThiS, forming ThiS-thiocarboxylate. This is a step in the synthesis of thiazole, in the thiamine biosynthesis pathway. The sulfur is donated as persulfide by IscS. This is Probable tRNA sulfurtransferase from Clostridium botulinum (strain Alaska E43 / Type E3).